Reading from the N-terminus, the 549-residue chain is Oxygen-dependent choline dehydrogenase (549 aa).

Position 4 to 33 (4 to 33 (DYIIIGSGSAGSALAHRLSEDSRNSVIVLE)) interacts with FAD. The Proton acceptor role is filled by histidine 465.

The protein belongs to the GMC oxidoreductase family. Requires FAD as cofactor.

The catalysed reaction is choline + A = betaine aldehyde + AH2. It carries out the reaction betaine aldehyde + NAD(+) + H2O = glycine betaine + NADH + 2 H(+). The protein operates within amine and polyamine biosynthesis; betaine biosynthesis via choline pathway; betaine aldehyde from choline (cytochrome c reductase route): step 1/1. Involved in the biosynthesis of the osmoprotectant glycine betaine. Catalyzes the oxidation of choline to betaine aldehyde and betaine aldehyde to glycine betaine at the same rate. In Sinorhizobium fredii (strain NBRC 101917 / NGR234), this protein is Oxygen-dependent choline dehydrogenase.